The following is a 223-amino-acid chain: Adenylate kinase (223 aa).

10–15 (GSGKGT) lines the ATP pocket. Residues 30 to 59 (ESGAIFREHIGGGTELGKKAKAYIDRGDLV) form an NMP region. Residues S31, R36, 57–59 (DLV), 84–87 (GFPR), and Q91 contribute to the AMP site. The tract at residues 125 to 164 (GRRLCKNNNNHPNNIFIEAIKPNGDVCRVCGGTLSSRSDD) is LID. R126 provides a ligand contact to ATP. Residues R161 and R173 each contribute to the AMP site. G209 lines the ATP pocket.

Belongs to the adenylate kinase family. Monomer.

It is found in the cytoplasm. The catalysed reaction is AMP + ATP = 2 ADP. The protein operates within purine metabolism; AMP biosynthesis via salvage pathway; AMP from ADP: step 1/1. Its function is as follows. Catalyzes the reversible transfer of the terminal phosphate group between ATP and AMP. Plays an important role in cellular energy homeostasis and in adenine nucleotide metabolism. This Desulfovibrio desulfuricans (strain ATCC 27774 / DSM 6949 / MB) protein is Adenylate kinase.